A 388-amino-acid chain; its full sequence is Chorismate synthase (388 aa).

NADP(+)-binding residues include Arg39 and Arg45. The tract at residues 95–118 is disordered; the sequence is EKNEKSRRVSRPRPGHADLVGGMK. FMN contacts are provided by residues 130 to 132, 251 to 252, Gly296, 311 to 315, and Arg337; these read RSS, NA, and KPIPT.

The protein belongs to the chorismate synthase family. In terms of assembly, homotetramer. Requires FMNH2 as cofactor.

The catalysed reaction is 5-O-(1-carboxyvinyl)-3-phosphoshikimate = chorismate + phosphate. The protein operates within metabolic intermediate biosynthesis; chorismate biosynthesis; chorismate from D-erythrose 4-phosphate and phosphoenolpyruvate: step 7/7. Its function is as follows. Catalyzes the anti-1,4-elimination of the C-3 phosphate and the C-6 proR hydrogen from 5-enolpyruvylshikimate-3-phosphate (EPSP) to yield chorismate, which is the branch point compound that serves as the starting substrate for the three terminal pathways of aromatic amino acid biosynthesis. This reaction introduces a second double bond into the aromatic ring system. The chain is Chorismate synthase from Listeria welshimeri serovar 6b (strain ATCC 35897 / DSM 20650 / CCUG 15529 / CIP 8149 / NCTC 11857 / SLCC 5334 / V8).